The sequence spans 377 residues: N-acetyldiaminopimelate deacetylase (377 aa).

Aspartate 70 is an active-site residue. The active-site Proton acceptor is the glutamate 129.

Belongs to the peptidase M20A family. N-acetyldiaminopimelate deacetylase subfamily.

The enzyme catalyses N-acetyl-(2S,6S)-2,6-diaminopimelate + H2O = (2S,6S)-2,6-diaminopimelate + acetate. It functions in the pathway amino-acid biosynthesis; L-lysine biosynthesis via DAP pathway; LL-2,6-diaminopimelate from (S)-tetrahydrodipicolinate (acetylase route): step 3/3. Functionally, catalyzes the conversion of N-acetyl-diaminopimelate to diaminopimelate and acetate. The protein is N-acetyldiaminopimelate deacetylase of Streptococcus thermophilus (strain CNRZ 1066).